We begin with the raw amino-acid sequence, 430 residues long: C4-dicarboxylate transport protein (430 aa).

The next 9 helical transmembrane spans lie at 8–28 (SLYF…HFYP), 44–64 (LIKM…IAGM), 76–96 (AALL…LVVV), 144–164 (AFAS…GFAL), 184–204 (VIFG…FGAM), 222–242 (LILC…GSIA), 289–309 (VVGL…SIYL), 326–346 (IWHQ…AAGV), and 352–372 (IVLA…LALI).

It belongs to the dicarboxylate/amino acid:cation symporter (DAACS) (TC 2.A.23) family.

The protein resides in the cell inner membrane. Responsible for the transport of dicarboxylates such as succinate, fumarate, and malate from the periplasm across the membrane. The polypeptide is C4-dicarboxylate transport protein (Pectobacterium atrosepticum (strain SCRI 1043 / ATCC BAA-672) (Erwinia carotovora subsp. atroseptica)).